We begin with the raw amino-acid sequence, 547 residues long: Probable bifunctional tRNA threonylcarbamoyladenosine biosynthesis protein (547 aa).

Positions 1–329 are kae1; that stretch reads MGNSNELICI…FRTDMVDVNW (329 aa). The Fe cation site is built by H112, H116, and Y133. Residues 133–137, D165, G178, E182, and N262 each bind L-threonylcarbamoyladenylate; that span reads YVSGG. Residue D290 participates in Fe cation binding. Positions 346-547 constitute a Protein kinase domain; the sequence is QIPRHLIGKG…KEVEKRGRYL (202 aa). ATP-binding positions include 352–360 and K373; that span reads IGKGAEADI. D465 acts as the Proton acceptor; for kinase activity in catalysis.

It in the N-terminal section; belongs to the KAE1 / TsaD family. The protein in the C-terminal section; belongs to the protein kinase superfamily. Tyr protein kinase family. BUD32 subfamily. As to quaternary structure, component of the KEOPS complex that consists of Kae1, Bud32, Cgi121 and Pcc1; the whole complex dimerizes. The cofactor is Fe(2+).

It is found in the cytoplasm. The enzyme catalyses L-seryl-[protein] + ATP = O-phospho-L-seryl-[protein] + ADP + H(+). It catalyses the reaction L-threonyl-[protein] + ATP = O-phospho-L-threonyl-[protein] + ADP + H(+). It carries out the reaction L-threonylcarbamoyladenylate + adenosine(37) in tRNA = N(6)-L-threonylcarbamoyladenosine(37) in tRNA + AMP + H(+). Required for the formation of a threonylcarbamoyl group on adenosine at position 37 (t(6)A37) in tRNAs that read codons beginning with adenine. Is a component of the KEOPS complex that is probably involved in the transfer of the threonylcarbamoyl moiety of threonylcarbamoyl-AMP (TC-AMP) to the N6 group of A37. The Kae1 domain likely plays a direct catalytic role in this reaction. The Bud32 domain probably displays kinase activity that regulates Kae1 function. The sequence is that of Probable bifunctional tRNA threonylcarbamoyladenosine biosynthesis protein from Methanococcus vannielii (strain ATCC 35089 / DSM 1224 / JCM 13029 / OCM 148 / SB).